We begin with the raw amino-acid sequence, 213 residues long: MKAFTKITAIVAPLDRSNVDTDAIIPKQFLKSIKRSGFGPNAFDEWRYLDHGEPGMDNSKRPLNPDFSLNQPRYQGAQILLTRKNFGCGSSREHAPWALDDYGFRAVIAPSFADIFFNNCYKNGLLPIVLTEEQVDRLFKEVEANEGYRLSIDLAEQTLTTPSGETFTFDITEHRKHCLLNGLDEIGLTLQHADEIHAFEEKRRQSQPWLFNG.

It belongs to the LeuD family. LeuD type 1 subfamily. In terms of assembly, heterodimer of LeuC and LeuD.

The catalysed reaction is (2R,3S)-3-isopropylmalate = (2S)-2-isopropylmalate. The protein operates within amino-acid biosynthesis; L-leucine biosynthesis; L-leucine from 3-methyl-2-oxobutanoate: step 2/4. Functionally, catalyzes the isomerization between 2-isopropylmalate and 3-isopropylmalate, via the formation of 2-isopropylmaleate. The sequence is that of 3-isopropylmalate dehydratase small subunit from Neisseria meningitidis serogroup A / serotype 4A (strain DSM 15465 / Z2491).